A 387-amino-acid chain; its full sequence is MKTIILALALIVLASSTQADVIATIKKIDQSPFGRTLFDTIWLELQTGDPLDRLLQTLTDLEDRYVAEQKEDDARNHEYQDACTVDIKAFDKDLAESNRKKIELEARLEGQLYPQRGILQGLVAQKQAEVKGYQKDLDELDAQRAEEKADFEEKVLEHQEATAIIAEARRLFADNIEHESFIQKGKATKQPAHKFTKEVASMIQKHFTTSAKKAAKFQHRKGYSKLFKAFATIASKVEQLADAGAVSKIIDLADELLAKIADSLSLLRFAEDKRVEAYKKSRNFIVISLTVAGTALANAQSDLAALNDVIAQVEASLDTTNQRIENVSADRNDRFTQCEEAVQDYQDARSARSSDRDVVSQTIGLVNKELRTLREQLALRQSAGEEI.

An N-terminal signal peptide occupies residues 1 to 19 (MKTIILALALIVLASSTQA). Residues 20–48 (DVIATIKKIDQSPFGRTLFDTIWLELQTG) constitute a propeptide that is removed on maturation. Residues 51–163 (LDRLLQTLTD…KVLEHQEATA (113 aa)) are a coiled coil. Positions 184 to 239 (KGKATKQPAHKFTKEVASMIQKHFTTSAKKAAKFQHRKGYSKLFKAFATIASKVEQ) are excised as a propeptide. Residues 294-333 (TALANAQSDLAALNDVIAQVEASLDTTNQRIENVSADRND) are a coiled coil.

The protein belongs to the TMP family. Two components are produced by post-translational processing from the precursor peptide.

It localises to the trichocyst. Structural protein that crystallize inside the trichocyst matrix. This chain is Trichocyst matrix protein T2-C (T2C), found in Paramecium tetraurelia.